The primary structure comprises 541 residues: T-complex protein 1 subunit epsilon (541 aa).

Residue Ala2 is modified to N-acetylalanine. Residue Lys20 forms a Glycyl lysine isopeptide (Lys-Gly) (interchain with G-Cter in SUMO2) linkage. Ser26 carries the post-translational modification Phosphoserine. Position 53 (Gly53) interacts with ADP. Gly53 contacts ATP. Asp104 serves as a coordination point for Mg(2+). Positions 105, 106, 107, and 175 each coordinate ADP. Residues Thr106 and Thr107 each contribute to the ATP site. Residues Lys210, Lys214, Lys265, Lys275, and Lys279 each participate in a glycyl lysine isopeptide (Lys-Gly) (interchain with G-Cter in SUMO2) cross-link. Ser346 carries the phosphoserine modification. Lys392 is covalently cross-linked (Glycyl lysine isopeptide (Lys-Gly) (interchain with G-Cter in SUMO2)). ADP-binding residues include Gly422, Asp492, Glu508, and Lys513. ATP is bound at residue Gly422. Ser539 bears the Phosphoserine mark.

Belongs to the TCP-1 chaperonin family. Component of the chaperonin-containing T-complex (TRiC), a hexadecamer composed of two identical back-to-back stacked rings enclosing a protein folding chamber. Each ring is made up of eight different subunits: TCP1/CCT1, CCT2, CCT3, CCT4, CCT5, CCT6A/CCT6, CCT7, CCT8. Interacts with PACRG. Interacts with DNAAF4. Interacts with DLEC1. Interacts with SPMAP2. Post-translationally, ubiquitinated by the DCX(DCAF12) complex specifically recognizes the diglutamate (Glu-Glu) at the C-terminus, leading to its degradation.

Its subcellular location is the cytoplasm. It localises to the cytoskeleton. The protein resides in the microtubule organizing center. It is found in the centrosome. It carries out the reaction ATP + H2O = ADP + phosphate + H(+). Component of the chaperonin-containing T-complex (TRiC), a molecular chaperone complex that assists the folding of actin, tubulin and other proteins upon ATP hydrolysis. The TRiC complex mediates the folding of WRAP53/TCAB1, thereby regulating telomere maintenance. As part of the TRiC complex may play a role in the assembly of BBSome, a complex involved in ciliogenesis regulating transports vesicles to the cilia. The chain is T-complex protein 1 subunit epsilon (CCT5) from Homo sapiens (Human).